A 424-amino-acid polypeptide reads, in one-letter code: Ubiquitin carboxyl-terminal hydrolase 12/46 homolog (424 aa).

A USP domain is found at 24 to 421 (FGLVNFGNTC…TGYILFYQSR (398 aa)). Cys-33 functions as the Nucleophile in the catalytic mechanism. The interval 131-189 (NAGPSNGNPKATNQGGSTSAMASSIASKSSSTSNSNSNSNSTTNSNGNSSNSTGSLNAN) is disordered. A compositionally biased stretch (polar residues) spans 133-144 (GPSNGNPKATNQ). Low complexity predominate over residues 145–189 (GGSTSAMASSIASKSSSTSNSNSNSNSTTNSNGNSSNSTGSLNAN). Residue His-369 is the Proton acceptor of the active site.

This sequence belongs to the peptidase C19 family. Catalytic component of the Usp12-46 deubiquitylase complex consisting of Usp12-46, Wdr20 and Uaf1. The Usp12-46 deubiquitylase complex associates with arr/arrow; the interaction leads to deubiquitination and stabilization of arr/arrow.

The enzyme catalyses Thiol-dependent hydrolysis of ester, thioester, amide, peptide and isopeptide bonds formed by the C-terminal Gly of ubiquitin (a 76-residue protein attached to proteins as an intracellular targeting signal).. Its function is as follows. Catalytic component of the Usp12-46 deubiquitylase complex. Deubiquitylates the wg/wingless-signaling receptor arr/arrow, which stabilizes the receptor and increases its concentration at the cell surface; this enhances the sensitivity of cells to wg/wingless-signal stimulation. This increases the amplitude and spatial range of the signaling response to the wg/wingless morphogen gradient, facilitating the precise, concentration-dependent regulation of its target genes. Required for wg/wingless-mediated signaling in the wing imaginal disc and for wg/wingless-dependent regulation of adult intestinal stem cell proliferation. Negative regulator of Notch signaling, possibly by regulating lysosomal degradation of N/Notch and affecting cell surface receptor levels; this may be context and cell-type specific function involved in external sensory organ development but not in wing imaginal-disc dorsoventral boundary signaling. Protects against HTT/huntingtin-induced polyglutamine expansion-dependent neurodegeneration. The polypeptide is Ubiquitin carboxyl-terminal hydrolase 12/46 homolog (Drosophila melanogaster (Fruit fly)).